A 259-amino-acid polypeptide reads, in one-letter code: MSEKFVELRKEFLTKLYKSTPSEQTSRSEKETWLEEKSKYLGEMTRELNEVQDQIAPYDRRVCMEQLVDLTRRLQQIRHDILPRQPFRFQRALHVKSSQKPVKNITVNAEAPEVYFENDTLYLANLKNQNIGDNVIPYPNNKAVKVSAKSLRSCNISISNCSSVNLHNATKCNFTFPTIQGSIHLSDINDSTICVSCHQFRLHHSTNLRVHLRCKTSPVIEESKEISFSYKDEHPILDFTWARSDPSPHFRITSDLFDA.

Positions 112–241 (PEVYFENDTL…DEHPILDFTW (130 aa)) constitute a C-CAP/cofactor C-like domain.

This sequence belongs to the TBCC family.

It is found in the cytoplasm. It localises to the cytoskeleton. Tubulin-folding protein; involved in the final step of the tubulin folding pathway. This Schizosaccharomyces pombe (strain 972 / ATCC 24843) (Fission yeast) protein is Tubulin-specific chaperone C (cin2).